The primary structure comprises 110 residues: U1-lycotoxin-Ls1kk (110 aa).

A signal peptide spans 1 to 20; sequence MKFVLLFGVFLVTLFSYSSA. Positions 21–44 are excised as a propeptide; the sequence is EMLDDFDQADEDELLSLIEKEEAR. 4 disulfide bridges follow: Cys-47/Cys-62, Cys-54/Cys-71, Cys-61/Cys-89, and Cys-73/Cys-87.

Belongs to the neurotoxin 19 (CSTX) family. 03 subfamily. As to expression, expressed by the venom gland.

Its subcellular location is the secreted. The polypeptide is U1-lycotoxin-Ls1kk (Lycosa singoriensis (Wolf spider)).